We begin with the raw amino-acid sequence, 1360 residues long: DNA-directed RNA polymerase subunit beta (1360 aa).

It belongs to the RNA polymerase beta chain family. The RNAP catalytic core consists of 2 alpha, 1 beta, 1 beta' and 1 omega subunit. When a sigma factor is associated with the core the holoenzyme is formed, which can initiate transcription.

It catalyses the reaction RNA(n) + a ribonucleoside 5'-triphosphate = RNA(n+1) + diphosphate. Functionally, DNA-dependent RNA polymerase catalyzes the transcription of DNA into RNA using the four ribonucleoside triphosphates as substrates. This Magnetococcus marinus (strain ATCC BAA-1437 / JCM 17883 / MC-1) protein is DNA-directed RNA polymerase subunit beta.